The chain runs to 193 residues: Leucyl/phenylalanyl-tRNA--protein transferase (193 aa).

The protein belongs to the L/F-transferase family.

The protein resides in the cytoplasm. The catalysed reaction is N-terminal L-lysyl-[protein] + L-leucyl-tRNA(Leu) = N-terminal L-leucyl-L-lysyl-[protein] + tRNA(Leu) + H(+). It catalyses the reaction N-terminal L-arginyl-[protein] + L-leucyl-tRNA(Leu) = N-terminal L-leucyl-L-arginyl-[protein] + tRNA(Leu) + H(+). The enzyme catalyses L-phenylalanyl-tRNA(Phe) + an N-terminal L-alpha-aminoacyl-[protein] = an N-terminal L-phenylalanyl-L-alpha-aminoacyl-[protein] + tRNA(Phe). Functionally, functions in the N-end rule pathway of protein degradation where it conjugates Leu, Phe and, less efficiently, Met from aminoacyl-tRNAs to the N-termini of proteins containing an N-terminal arginine or lysine. This chain is Leucyl/phenylalanyl-tRNA--protein transferase, found in Akkermansia muciniphila (strain ATCC BAA-835 / DSM 22959 / JCM 33894 / BCRC 81048 / CCUG 64013 / CIP 107961 / Muc).